An 83-amino-acid chain; its full sequence is MKAAILLAFAGLALLSVICHASENVEQDSFEEVFSAIFAMEDDLKPKERVCRGYGLPCTPEKNDCCQRLYCSQHRLCSVKAGK.

An N-terminal signal peptide occupies residues 1–21 (MKAAILLAFAGLALLSVICHA). Positions 22–49 (SENVEQDSFEEVFSAIFAMEDDLKPKER) are excised as a propeptide. Disulfide bonds link C51–C66, C58–C71, and C65–C77. Alanine amide is present on A81.

Belongs to the neurotoxin 10 (Hwtx-1) family. 66 (Jztx-24) subfamily. In terms of tissue distribution, expressed by the venom gland.

It is found in the secreted. Probable ion channel inhibitor. This is U15-theraphotoxin-Cg1a from Chilobrachys guangxiensis (Chinese earth tiger tarantula).